Consider the following 976-residue polypeptide: Vacuolar membrane protease (976 aa).

Residues 1 to 15 (MKLKSVFRSVLKYRK) lie on the Cytoplasmic side of the membrane. A helical transmembrane segment spans residues 16–36 (TNLSLLLLITYSIITLLYIFD). The Vacuolar segment spans residues 37 to 359 (HERYKLNLPK…KFFVISAKTL (323 aa)). 2 N-linked (GlcNAc...) asparagine glycosylation sites follow: asparagine 96 and asparagine 121. 2 residues coordinate Zn(2+): histidine 156 and aspartate 168. Residue asparagine 189 is glycosylated (N-linked (GlcNAc...) asparagine). The active-site Proton acceptor is the glutamate 200. Zn(2+) is bound at residue glutamate 201. 2 N-linked (GlcNAc...) asparagine glycosylation sites follow: asparagine 212 and asparagine 217. Positions 226 and 300 each coordinate Zn(2+). Residues 360–380 (FYWNCIFLLVSPVVAIGLYLI) form a helical membrane-spanning segment. The Cytoplasmic segment spans residues 381 to 392 (SRDRMTWKSHSW). A helical membrane pass occupies residues 393-412 (LSWTRFPLSLAAGIIVQKLF). Residues 413-428 (SNDIIRSNPLTFSRNY) lie on the Vacuolar side of the membrane. The helical transmembrane segment at 429–449 (FWPISAFFTQVIFTSYVLINC) threads the bilayer. Topologically, residues 450–461 (SNFFFPCADMKS) are cytoplasmic. Residues 462 to 482 (LSIIELFIILWTILLFTSKLL) form a helical membrane-spanning segment. Over 483-496 (YSSDYRYTGLYPLS) the chain is Vacuolar. The chain crosses the membrane as a helical span at residues 497–517 (IFFLLSTIAAILRLLALALGM). The Cytoplasmic portion of the chain corresponds to 518-627 (RTRKRLGREC…NSLKLEYTDY (110 aa)). Positions 528–610 (RDHHSNYSSH…PLLKGSNSME (83 aa)) are disordered. Over residues 549–558 (NLEQPQDQFT) the composition is skewed to polar residues. The span at 559–570 (SSQDDQASIQDD) shows a compositional bias: low complexity. The span at 582-601 (NVDEDHGMDSSSQQHDERVP) shows a compositional bias: basic and acidic residues. A helical transmembrane segment spans residues 628 to 648 (AWIIQFLLIVPIPSFILFNSV). At 649–668 (DVIMDALNHTVQEGSKATFD) the chain is on the vacuolar side. Asparagine 656 carries an N-linked (GlcNAc...) asparagine glycan. The chain crosses the membrane as a helical span at residues 669 to 689 (VLRFGMVGSILMALPILPFFY). Over 690–692 (KVN) the chain is Cytoplasmic. The helical transmembrane segment at 693–713 (YITISLTALLFLISASKTLLV) threads the bilayer. Residues 714-976 (HPFTNSNPLK…LVIVKDAIIL (263 aa)) are Vacuolar-facing. Residues asparagine 768, asparagine 796, asparagine 811, asparagine 866, and asparagine 937 are each glycosylated (N-linked (GlcNAc...) asparagine).

It belongs to the peptidase M28 family. It depends on Zn(2+) as a cofactor.

It localises to the vacuole membrane. In terms of biological role, may be involved in vacuolar sorting and osmoregulation. This Saccharomyces cerevisiae (strain YJM789) (Baker's yeast) protein is Vacuolar membrane protease.